The following is a 175-amino-acid chain: Adenylyl-sulfate kinase (175 aa).

12–19 contacts ATP; sequence GLSGAGKT. Serine 86 serves as the catalytic Phosphoserine intermediate.

It belongs to the APS kinase family.

The catalysed reaction is adenosine 5'-phosphosulfate + ATP = 3'-phosphoadenylyl sulfate + ADP + H(+). It functions in the pathway sulfur metabolism; hydrogen sulfide biosynthesis; sulfite from sulfate: step 2/3. In terms of biological role, catalyzes the synthesis of activated sulfate. The protein is Adenylyl-sulfate kinase of Synechococcus sp. (strain JA-2-3B'a(2-13)) (Cyanobacteria bacterium Yellowstone B-Prime).